We begin with the raw amino-acid sequence, 366 residues long: Protein-glutamate methylesterase/protein-glutamine glutaminase of group 2 operon (366 aa).

Positions 19-136 constitute a Response regulatory domain; it reads RVLIVDDSAM…GQGLPAIMRD (118 aa). Aspartate 70 is subject to 4-aspartylphosphate. A CheB-type methylesterase domain is found at 162-356; it reads PGASEDWIHA…ARMMLAAAAD (195 aa). Active-site residues include serine 175, histidine 201, and aspartate 298.

It belongs to the CheB family. Phosphorylated by CheA. Phosphorylation of the N-terminal regulatory domain activates the methylesterase activity.

Its subcellular location is the cytoplasm. It catalyses the reaction [protein]-L-glutamate 5-O-methyl ester + H2O = L-glutamyl-[protein] + methanol + H(+). The catalysed reaction is L-glutaminyl-[protein] + H2O = L-glutamyl-[protein] + NH4(+). Its function is as follows. Involved in chemotaxis. Part of a chemotaxis signal transduction system that modulates chemotaxis in response to various stimuli. Catalyzes the demethylation of specific methylglutamate residues introduced into the chemoreceptors (methyl-accepting chemotaxis proteins or MCP) by CheR. Also mediates the irreversible deamidation of specific glutamine residues to glutamic acid. In Cereibacter sphaeroides (Rhodobacter sphaeroides), this protein is Protein-glutamate methylesterase/protein-glutamine glutaminase of group 2 operon.